We begin with the raw amino-acid sequence, 582 residues long: uncharacterized protein (582 aa).

Residues 1–27 (MNYAVLPPELNSLRMFTGAGSAPMLAA) form the signal peptide. The span at 241 to 257 (GNGRAGLPGSGNVGNGN) shows a compositional bias: gly residues. A disordered region spans residues 241 to 278 (GNGRAGLPGSGNVGNGNLGNSNLGSGNTGNSNVGFGNT). Residues 258–278 (LGNSNLGSGNTGNSNVGFGNT) show a composition bias toward low complexity.

Belongs to the mycobacterial PPE family.

This is an uncharacterized protein from Mycobacterium tuberculosis (strain ATCC 25618 / H37Rv).